Reading from the N-terminus, the 386-residue chain is Ribonucleoside-diphosphate reductase subunit M2 (386 aa).

A Phosphoserine modification is found at Ser20. Residue Thr33 is modified to Phosphothreonine. The short motif at 49–51 (RRI) is the Cy element. Residues Asp139, Glu170, and His173 each coordinate Fe cation. Tyr177 is an active-site residue. Positions 233, 267, and 270 each coordinate Fe cation.

The protein belongs to the ribonucleoside diphosphate reductase small chain family. As to quaternary structure, heterodimer of a large and a small subunit. Interacts (via Cy motif and when phosphorylated at Thr-33) with CCNF; the interaction occurs exclusively in G2 and early M. Fe cation serves as cofactor. Phosphorylation on Ser-20 relieves the inhibitory effect on Wnt signaling. Phosphorylated on Thr-33 by CDK1 and CDK2; predominantly in G2 and M phase. Post-translationally, ubiquitinated by the SCF(CCNF) E3 ubiquitin-protein ligase complex; leading to its degradation by the proteasome.

Its subcellular location is the cytoplasm. The protein resides in the nucleus. It catalyses the reaction a 2'-deoxyribonucleoside 5'-diphosphate + [thioredoxin]-disulfide + H2O = a ribonucleoside 5'-diphosphate + [thioredoxin]-dithiol. Functionally, provides the precursors necessary for DNA synthesis. Catalyzes the biosynthesis of deoxyribonucleotides from the corresponding ribonucleotides. Inhibits Wnt signaling. This Mesocricetus auratus (Golden hamster) protein is Ribonucleoside-diphosphate reductase subunit M2 (RRM2).